The following is a 476-amino-acid chain: Glutamyl-tRNA(Gln) amidotransferase subunit A (476 aa).

Residues K77 and S152 each act as charge relay system in the active site. The active-site Acyl-ester intermediate is the S176.

The protein belongs to the amidase family. GatA subfamily. In terms of assembly, heterotrimer of A, B and C subunits.

The catalysed reaction is L-glutamyl-tRNA(Gln) + L-glutamine + ATP + H2O = L-glutaminyl-tRNA(Gln) + L-glutamate + ADP + phosphate + H(+). Its function is as follows. Allows the formation of correctly charged Gln-tRNA(Gln) through the transamidation of misacylated Glu-tRNA(Gln) in organisms which lack glutaminyl-tRNA synthetase. The reaction takes place in the presence of glutamine and ATP through an activated gamma-phospho-Glu-tRNA(Gln). The protein is Glutamyl-tRNA(Gln) amidotransferase subunit A of Acidobacterium capsulatum (strain ATCC 51196 / DSM 11244 / BCRC 80197 / JCM 7670 / NBRC 15755 / NCIMB 13165 / 161).